The chain runs to 212 residues: Urease accessory protein UreG (212 aa).

19 to 26 (GPVGSGKT) is a binding site for GTP.

The protein belongs to the SIMIBI class G3E GTPase family. UreG subfamily. Homodimer. UreD, UreF and UreG form a complex that acts as a GTP-hydrolysis-dependent molecular chaperone, activating the urease apoprotein by helping to assemble the nickel containing metallocenter of UreC. The UreE protein probably delivers the nickel.

The protein localises to the cytoplasm. In terms of biological role, facilitates the functional incorporation of the urease nickel metallocenter. This process requires GTP hydrolysis, probably effectuated by UreG. The sequence is that of Urease accessory protein UreG from Vibrio parahaemolyticus.